Here is a 130-residue protein sequence, read N- to C-terminus: T-cell receptor beta chain V region A20.2.25 (130 aa).

The first 21 residues, 1–21, serve as a signal peptide directing secretion; it reads MSCRLLLYVSLCLVETALMNT. The segment at 22-112 is v segment; that stretch reads KITQSPRYLI…DSAVYFCASS (91 aa). N-linked (GlcNAc...) asparagine glycans are attached at residues N36 and N75. Residues 113-115 form a d segment region; sequence HGE. The segment at 116-130 is j segment; that stretch reads NTEVFFGKGTTLTVV.

This chain is T-cell receptor beta chain V region A20.2.25, found in Mus musculus (Mouse).